The primary structure comprises 583 residues: Isocitrate dehydrogenase kinase/phosphatase (583 aa).

ATP contacts are provided by residues A315–M321 and K336. D371 is a catalytic residue.

It belongs to the AceK family.

Its subcellular location is the cytoplasm. It carries out the reaction L-seryl-[isocitrate dehydrogenase] + ATP = O-phospho-L-seryl-[isocitrate dehydrogenase] + ADP + H(+). Bifunctional enzyme which can phosphorylate or dephosphorylate isocitrate dehydrogenase (IDH) on a specific serine residue. This is a regulatory mechanism which enables bacteria to bypass the Krebs cycle via the glyoxylate shunt in response to the source of carbon. When bacteria are grown on glucose, IDH is fully active and unphosphorylated, but when grown on acetate or ethanol, the activity of IDH declines drastically concomitant with its phosphorylation. This chain is Isocitrate dehydrogenase kinase/phosphatase, found in Salmonella enteritidis PT4 (strain P125109).